The following is a 748-amino-acid chain: Phytochrome-like protein Cph1 (748 aa).

Positions 19–86 constitute a PAS domain; it reads AIHTAHLIQP…IQSRLTAGQI (68 aa). The interval 87 to 510 is chromophore binding domain; the sequence is SSLNPSKLWA…KKAIVNLILR (424 aa). The 169-residue stretch at 152 to 320 folds into the GAF domain; that stretch reads NLRDFYDVIV…VVFSNISAQE (169 aa). Cysteine 259 lines the a tetrapyrrole pocket. The Histidine kinase domain occupies 535–748; the sequence is IASHDLQEPL…TFYFSIPIGN (214 aa). Histidine 538 carries the post-translational modification Phosphohistidine; by autocatalysis.

This sequence in the N-terminal section; belongs to the phytochrome family. In terms of assembly, homodimer. Contains one covalently linked tetrapyrrole chromophore.

It carries out the reaction ATP + protein L-histidine = ADP + protein N-phospho-L-histidine.. Regulatory photoreceptor which exists in two forms that are reversibly interconvertible by light: the R form that absorbs maximally in the red region of the spectrum and the FR form that absorbs maximally in the far-red region. Also has a slight blue shift for the far-red maximum. Forms a two-component system with the Rrcp1 response regulator. The polypeptide is Phytochrome-like protein Cph1 (cph1) (Synechocystis sp. (strain ATCC 27184 / PCC 6803 / Kazusa)).